The chain runs to 237 residues: Myb-related protein MYBAS1 (237 aa).

HTH myb-type domains lie at 5 to 57 and 58 to 112; these read REEM…VNYL and HPGL…RKKA. A DNA-binding region (H-T-H motif) is located at residues 33 to 57; sequence WDFVAKVSGLNRTGKSCRLRWVNYL. A Bipartite nuclear localization signal 1 motif is present at residues 62 to 65; that stretch reads KHGR. The segment at residues 85–108 is a DNA-binding region (H-T-H motif); sequence WSRIARRLPGRTDNEIKNYWRTHM. Residues 109–117 carry the Bipartite nuclear localization signal 2 motif; it reads RKKAQERRG.

It is found in the nucleus. In terms of biological role, transcription factor. This is Myb-related protein MYBAS1 (MYBAS1) from Oryza sativa subsp. japonica (Rice).